A 141-amino-acid polypeptide reads, in one-letter code: MAVQRTFSIIKPDAVAKNVIGKITTRFEEAGLKIVASKMKQLSKAEAEGFYAEHSERGFFGDLVAFMTSGPVVVQVLEGENAIAKNRELMGATNPKEAAAGTIRADFAESIDANAVHGSDSEAAAAREIAYFFAATEVTTR.

Residues K11, F59, R87, T93, R104, and N114 each coordinate ATP. H117 acts as the Pros-phosphohistidine intermediate in catalysis.

Belongs to the NDK family. In terms of assembly, homotetramer. Mg(2+) is required as a cofactor.

It localises to the cytoplasm. The enzyme catalyses a 2'-deoxyribonucleoside 5'-diphosphate + ATP = a 2'-deoxyribonucleoside 5'-triphosphate + ADP. It catalyses the reaction a ribonucleoside 5'-diphosphate + ATP = a ribonucleoside 5'-triphosphate + ADP. Functionally, major role in the synthesis of nucleoside triphosphates other than ATP. The ATP gamma phosphate is transferred to the NDP beta phosphate via a ping-pong mechanism, using a phosphorylated active-site intermediate. This is Nucleoside diphosphate kinase from Pseudomonas putida (strain ATCC 47054 / DSM 6125 / CFBP 8728 / NCIMB 11950 / KT2440).